Consider the following 284-residue polypeptide: Averufin oxidase A (284 aa).

A signal peptide spans 1–23 (MPTYALLGATGATGSAILRCLLA). N-linked (GlcNAc...) asparagine glycans are attached at residues Asn-62, Asn-86, and Asn-190.

This sequence belongs to the avfA family.

It participates in mycotoxin biosynthesis. In terms of biological role, averufin oxidase A; part of the fragmented gene cluster that mediates the biosynthesis of dothistromin (DOTH), a polyketide toxin very similar in structure to the aflatoxin precursor, versicolorin B. The first step of the pathway is the conversion of acetate to norsolorinic acid (NOR) and requires the fatty acid synthase subunits hexA and hexB, as well as the polyketide synthase pksA. PksA combines a hexanoyl starter unit and 7 malonyl-CoA extender units to synthesize the precursor NOR. The hexanoyl starter unit is provided to the acyl-carrier protein (ACP) domain by the fungal fatty acid synthase hexA/hexB. The second step is the conversion of NOR to averantin (AVN) and requires the norsolorinic acid ketoreductase nor1, which catalyzes the dehydration of norsolorinic acid to form (1'S)-averantin. The cytochrome P450 monooxygenase avnA then catalyzes the hydroxylation of AVN to 5'hydroxyaverantin (HAVN). The next step is performed by adhA that transforms HAVN to averufin (AVF). Averufin might then be converted to hydroxyversicolorone by cypX and avfA. Hydroxyversicolorone is further converted versiconal hemiacetal acetate (VHA) by moxY. VHA is then the substrate for the versiconal hemiacetal acetate esterase est1 to yield versiconal (VAL). Versicolorin B synthase vbsA then converts VAL to versicolorin B (VERB) by closing the bisfuran ring. Then, the activity of the versicolorin B desaturase verB leads to versicolorin A (VERA). DotB, a predicted chloroperoxidase, may perform epoxidation of the A-ring of VERA. Alternatively, a cytochrome P450, such as cypX or avnA could catalyze this step. It is also possible that another, uncharacterized, cytochrome P450 enzyme is responsible for this step. Opening of the epoxide could potentially be achieved by the epoxide hydrolase epoA. However, epoA seems not to be required for DOTH biosynthesis, but other epoxide hydrolases may have the ability to complement this hydrolysis. Alternatively, opening of the epoxide ring could be achieved non-enzymatically. The next step is the deoxygenation of ring A to yield the 5,8-dihydroxyanthraquinone which is most likely catalyzed by the NADPH dehydrogenase encoded by ver1. The last stages of DOTH biosynthesis are proposed to involve hydroxylation of the bisfuran. OrdB and norB might have oxidative roles here. An alternative possibility is that cytochrome P450 monoogenases such as avnA and cypX might perform these steps in addition to previously proposed steps. This is Averufin oxidase A from Dothistroma septosporum (strain NZE10 / CBS 128990) (Red band needle blight fungus).